A 187-amino-acid chain; its full sequence is MSHLALKDLFSGFFVIDDEEEVEVPDKQQQVNEAPAKEQSQQTTKQNAIKSVPQKSASRYTTTSEERNNRMSNYSKNNSRNVVTMNNATPNNASQESSKMCLFEPRVFSDTQDIADELKNRRATLVNLQRIDKVSAKRIIDFLSGTVYAIGGDIQRVGTDIFLCTPDNVEVAGSITDHIENVEHSFD.

The interval 21 to 97 (EVEVPDKQQQ…ATPNNASQES (77 aa)) is disordered. Polar residues-rich tracts occupy residues 38-63 (EQSQ…YTTT) and 70-97 (RMSN…SQES).

It belongs to the SepF family. Homodimer. Interacts with FtsZ.

Its subcellular location is the cytoplasm. Functionally, cell division protein that is part of the divisome complex and is recruited early to the Z-ring. Probably stimulates Z-ring formation, perhaps through the cross-linking of FtsZ protofilaments. Its function overlaps with FtsA. This Staphylococcus aureus (strain MRSA252) protein is Cell division protein SepF.